The sequence spans 322 residues: Solute carrier family 25 member 16 (322 aa).

Solcar repeat units follow at residues 34-120, 128-219, and 241-322; these read FYWL…YKTF, SGHV…LKSV, and LKTH…AVAF.

This sequence belongs to the mitochondrial carrier (TC 2.A.29) family.

The protein resides in the mitochondrion inner membrane. May be involved in the transport of coenzyme A in the mitochondrial matrix. Very little is known about the physiological function of this carrier. The chain is Solute carrier family 25 member 16 from Rattus norvegicus (Rat).